The following is a 59-amino-acid chain: Protein translocase subunit SecE (59 aa).

A helical transmembrane segment spans residues 39–59 (VMALFLGLIDALFVALLSFFF).

It belongs to the SecE/SEC61-gamma family. In terms of assembly, component of the Sec protein translocase complex. Heterotrimer consisting of SecY, SecE and SecG subunits. The heterotrimers can form oligomers, although 1 heterotrimer is thought to be able to translocate proteins. Interacts with the ribosome. Interacts with SecDF, and other proteins may be involved. Interacts with SecA.

Its subcellular location is the cell inner membrane. Its function is as follows. Essential subunit of the Sec protein translocation channel SecYEG. Clamps together the 2 halves of SecY. May contact the channel plug during translocation. The polypeptide is Protein translocase subunit SecE (Treponema pallidum (strain Nichols)).